We begin with the raw amino-acid sequence, 259 residues long: 5'-nucleotidase SurE (259 aa).

A divalent metal cation contacts are provided by D8, D9, S41, and N99.

This sequence belongs to the SurE nucleotidase family. A divalent metal cation is required as a cofactor.

The protein resides in the cytoplasm. The enzyme catalyses a ribonucleoside 5'-phosphate + H2O = a ribonucleoside + phosphate. Its function is as follows. Nucleotidase that shows phosphatase activity on nucleoside 5'-monophosphates. This chain is 5'-nucleotidase SurE, found in Synechococcus sp. (strain JA-3-3Ab) (Cyanobacteria bacterium Yellowstone A-Prime).